A 156-amino-acid polypeptide reads, in one-letter code: Nuclear cap-binding protein subunit 2 (156 aa).

S2 carries the post-translational modification N-acetylserine. A phosphoserine mark is found at S13 and S18. MRNA contacts are provided by residues Y20, Y43, 112 to 116, 123 to 127, and 133 to 134; these read RTDWD, RQYGR, and QV. The 79-residue stretch at 40-118 folds into the RRM domain; sequence CTLYVGNLSF…RIIRTDWDAG (79 aa). Residues 124-156 form a disordered region; sequence QYGRGRSGGQVRDEYRQDYDAGRGGYGKLAQNQ. Over residues 134 to 144 the composition is skewed to basic and acidic residues; sequence VRDEYRQDYDA. R146 is modified (omega-N-methylarginine).

Belongs to the RRM NCBP2 family. In terms of assembly, component of the nuclear cap-binding complex (CBC), a heterodimer composed of NCBP1/CBP80 and NCBP2/CBP20 that interacts with m7GpppG-capped RNA. Found in a U snRNA export complex with PHAX/RNUXA, NCBP1/CBP80, NCBP2/CBP20, RAN, XPO1 and m7G-capped RNA. Interacts with PHAX/RNUXA, EIF4G1, HNRNPF, HNRNPH1 and ALYREF/THOC4/ALY. Interacts with SRRT/ARS2 and KPNA3.

The protein resides in the nucleus. It localises to the cytoplasm. Its function is as follows. Component of the cap-binding complex (CBC), which binds co-transcriptionally to the 5' cap of pre-mRNAs and is involved in various processes such as pre-mRNA splicing, translation regulation, nonsense-mediated mRNA decay, RNA-mediated gene silencing (RNAi) by microRNAs (miRNAs) and mRNA export. The CBC complex is involved in mRNA export from the nucleus via its interaction with ALYREF/THOC4/ALY, leading to the recruitment of the mRNA export machinery to the 5' end of mRNA and to mRNA export in a 5' to 3' direction through the nuclear pore. The CBC complex is also involved in mediating U snRNA and intronless mRNAs export from the nucleus. The CBC complex is essential for a pioneer round of mRNA translation, before steady state translation when the CBC complex is replaced by cytoplasmic cap-binding protein eIF4E. The pioneer round of mRNA translation mediated by the CBC complex plays a central role in nonsense-mediated mRNA decay (NMD), NMD only taking place in mRNAs bound to the CBC complex, but not on eIF4E-bound mRNAs. The CBC complex enhances NMD in mRNAs containing at least one exon-junction complex (EJC) via its interaction with UPF1, promoting the interaction between UPF1 and UPF2. The CBC complex is also involved in 'failsafe' NMD, which is independent of the EJC complex, while it does not participate in Staufen-mediated mRNA decay (SMD). During cell proliferation, the CBC complex is also involved in microRNAs (miRNAs) biogenesis via its interaction with SRRT/ARS2, thereby being required for miRNA-mediated RNA interference. The CBC complex also acts as a negative regulator of PARN, thereby acting as an inhibitor of mRNA deadenylation. In the CBC complex, NCBP2/CBP20 recognizes and binds capped RNAs (m7GpppG-capped RNA) but requires NCBP1/CBP80 to stabilize the movement of its N-terminal loop and lock the CBC into a high affinity cap-binding state with the cap structure. The conventional cap-binding complex with NCBP2 binds both small nuclear RNA (snRNA) and messenger (mRNA) and is involved in their export from the nucleus. This Bos taurus (Bovine) protein is Nuclear cap-binding protein subunit 2 (NCBP2).